We begin with the raw amino-acid sequence, 554 residues long: Movement protein Hsp70h (554 aa).

It belongs to the heat shock protein 70 family.

It localises to the virion. Transports viral genome to neighboring plant cells directly through plasmosdesmata, without any budding. The movement protein allows efficient cell to cell propagation, by bypassing the host cell wall barrier. Two movement proteins, p6, Hsp70h and three structural proteins, CP, CPm, and P64 are essential for cell-cell movement. Also plays a role in virion formation. Together with CPm and p64, encapsidates the 5'-terminal portion of the viral genome. The chain is Movement protein Hsp70h from Lettuce infectious yellows virus (isolate United States/92) (LIYV).